Here is a 292-residue protein sequence, read N- to C-terminus: MLKRDQSEMDIEAETANMGKEEKESFVHKRQKYRQEQEEKRLAAKKGVSFEQPEDGEIKLPKKRYYRQRAHSNPFSDHQLEYPESPADMDWDVLYPNRKEGQKVEVADIGCGFGGLLVALSPQLPNQLILGMEIRVQVTNYVEDRIVALRHQNKETDGYQNISVLRGNAMKFLPNFFEKGQLSKIFFCFPDPHFKQRKHKARIVTTTLCSEYAYVVRPGGIVYTITDVKDLHEWMVKHLAAHPLFERLTKEEEDADPCVATMLVETEEGKKVARNEGDKFVACFRRKENPEW.

The segment at 1–54 is disordered; that stretch reads MLKRDQSEMDIEAETANMGKEEKESFVHKRQKYRQEQEEKRLAAKKGVSFEQPE. Over residues 19 to 42 the composition is skewed to basic and acidic residues; the sequence is GKEEKESFVHKRQKYRQEQEEKRL. S-adenosyl-L-methionine contacts are provided by residues Gly-110, 133–134, 168–169, and Cys-188; these read EI and NA. Residue Asp-191 is part of the active site. 266 to 268 is a binding site for S-adenosyl-L-methionine; sequence TEE.

Belongs to the class I-like SAM-binding methyltransferase superfamily. TrmB family. As to quaternary structure, forms a complex with TRM82.

Its subcellular location is the nucleus. The enzyme catalyses guanosine(46) in tRNA + S-adenosyl-L-methionine = N(7)-methylguanosine(46) in tRNA + S-adenosyl-L-homocysteine. It participates in tRNA modification; N(7)-methylguanine-tRNA biosynthesis. Its function is as follows. Catalyzes the formation of N(7)-methylguanine at position 46 (m7G46) in tRNA. The protein is tRNA (guanine-N(7)-)-methyltransferase of Yarrowia lipolytica (strain CLIB 122 / E 150) (Yeast).